We begin with the raw amino-acid sequence, 41 residues long: Antifungal peptide 2 (41 aa).

Gln-1 carries the pyrrolidone carboxylic acid modification. Intrachain disulfides connect Cys-3–Cys-17, Cys-7–Cys-37, Cys-11–Cys-23, Cys-16–Cys-30, and Cys-35–Cys-39. One can recognise a Chitin-binding type-1 domain in the interval 4–41 (ASRCPRPCNAGLCCSIYGYCGSGAAYCGAGNCRCQCRG).

In terms of assembly, monomer.

Functionally, has antifungal activity against P.infestans, A.lycopersici, V.dahliae, G.zeae, A.nicotianae, F.moniliforme, F.oxysporum and C.gossypii. The polypeptide is Antifungal peptide 2 (Eucommia ulmoides (Hardy rubber tree)).